The chain runs to 384 residues: Queuine tRNA-ribosyltransferase (384 aa).

Asp93 acts as the Proton acceptor in catalysis. Residues 93–97 (DSGGF), Asp147, Gln202, and Gly229 contribute to the substrate site. The tract at residues 260–266 (GVGYPEE) is RNA binding. The active-site Nucleophile is the Asp279. The segment at 284-288 (TRAAR) is RNA binding; important for wobble base 34 recognition. Cys317, Cys319, Cys322, and His348 together coordinate Zn(2+).

The protein belongs to the queuine tRNA-ribosyltransferase family. As to quaternary structure, homodimer. Within each dimer, one monomer is responsible for RNA recognition and catalysis, while the other monomer binds to the replacement base PreQ1. Zn(2+) serves as cofactor.

The catalysed reaction is 7-aminomethyl-7-carbaguanine + guanosine(34) in tRNA = 7-aminomethyl-7-carbaguanosine(34) in tRNA + guanine. It participates in tRNA modification; tRNA-queuosine biosynthesis. Functionally, catalyzes the base-exchange of a guanine (G) residue with the queuine precursor 7-aminomethyl-7-deazaguanine (PreQ1) at position 34 (anticodon wobble position) in tRNAs with GU(N) anticodons (tRNA-Asp, -Asn, -His and -Tyr). Catalysis occurs through a double-displacement mechanism. The nucleophile active site attacks the C1' of nucleotide 34 to detach the guanine base from the RNA, forming a covalent enzyme-RNA intermediate. The proton acceptor active site deprotonates the incoming PreQ1, allowing a nucleophilic attack on the C1' of the ribose to form the product. After dissociation, two additional enzymatic reactions on the tRNA convert PreQ1 to queuine (Q), resulting in the hypermodified nucleoside queuosine (7-(((4,5-cis-dihydroxy-2-cyclopenten-1-yl)amino)methyl)-7-deazaguanosine). The chain is Queuine tRNA-ribosyltransferase from Koribacter versatilis (strain Ellin345).